The primary structure comprises 196 residues: Ribosomal RNA small subunit methyltransferase G (196 aa).

S-adenosyl-L-methionine-binding positions include Gly77, Phe82, 127–128, and Arg140; that span reads AE.

This sequence belongs to the methyltransferase superfamily. RNA methyltransferase RsmG family.

The protein localises to the cytoplasm. Specifically methylates the N7 position of a guanine in 16S rRNA. The chain is Ribosomal RNA small subunit methyltransferase G from Aquifex aeolicus (strain VF5).